Reading from the N-terminus, the 2271-residue chain is Serine-rich adhesin for platelets (2271 aa).

A signal peptide spans 1 to 89 (MSKRQKAFHD…VNMLHDQQAF (89 aa)). The serine-rich repeat region 1, SRR1 stretch occupies residues 90-230 (AASDAPLTSE…KTSTTSTSTA (141 aa)). The span at 100 to 111 (LNTQSETVGNQN) shows a compositional bias: polar residues. 3 disordered regions span residues 100–229 (LNTQ…STST), 751–791 (NSMS…VVST), and 806–2243 (SVSA…GLLG). Over residues 112 to 128 (STTIEASTSTADSTSVT) the composition is skewed to low complexity. Polar residues predominate over residues 129 to 140 (KNSSSVQTSNSD). Low complexity predominate over residues 150-229 (VTSTTNSTSN…NKTSTTSTST (80 aa)). The non-repeat region (NRR) stretch occupies residues 231 to 751 (PVKLRTFSRL…TTFKYEVTRN (521 aa)). 3 stretches are compositionally biased toward low complexity: residues 752-791 (SMSD…VVST), 806-1392 (SVSA…LSLS), and 1402-2214 (SNSA…ATSE). Positions 752 to 2232 (SMSDSVSTSG…AQSEKRLPDT (1481 aa)) are serine-rich repeat region 2, SRR2. The LPXTG sorting signal signature appears at 2229 to 2233 (LPDTG). T2232 carries the pentaglycyl murein peptidoglycan amidated threonine modification. Residues 2233–2271 (GDSIKQNGLLGGVMTLLVGLGLMKRKKKKDENDQDDSQA) constitute a propeptide, removed by sortase.

Belongs to the serine-rich repeat protein (SRRP) family. Proteolytically cleaved by a metalloprotease. Post-translationally, glycosylated. It is probable that most of the Ser residues in SSR1 and SSR2 are O-GlcNAcylated. Sequential glycosylation by sugar transferases are able to generate complex sugar polymorphisms.

It localises to the secreted. It is found in the cell wall. In terms of biological role, mediates binding to human platelets, possibly through a receptor-ligand interaction. Probably associated with virulence in endovascular infection. In Staphylococcus aureus (strain USA300), this protein is Serine-rich adhesin for platelets (sraP).